The chain runs to 117 residues: Immunoglobulin heavy variable 1-58 (117 aa).

The N-terminal stretch at 1-19 (MDWIWRILFLVGAATGAHS) is a signal peptide. Residues 20-44 (QMQLVQSGPEVKKPGTSVKVSCKAS) form a framework-1 region. The 98-residue stretch at 20 to 117 (QMQLVQSGPE…EDTAVYYCAA (98 aa)) folds into the Ig-like domain. Cysteines 41 and 115 form a disulfide. The segment at 45 to 52 (GFTFTSSA) is complementarity-determining-1. Residues 53-69 (VQWVRQARGQRLEWIGW) are framework-2. The segment at 70–77 (IVVGSGNT) is complementarity-determining-2. The framework-3 stretch occupies residues 78–115 (NYAQKFQERVTITRDMSTSTAYMELSSLRSEDTAVYYC). The segment at 116-117 (AA) is complementarity-determining-3.

As to quaternary structure, immunoglobulins are composed of two identical heavy chains and two identical light chains; disulfide-linked.

The protein localises to the secreted. It localises to the cell membrane. V region of the variable domain of immunoglobulin heavy chains that participates in the antigen recognition. Immunoglobulins, also known as antibodies, are membrane-bound or secreted glycoproteins produced by B lymphocytes. In the recognition phase of humoral immunity, the membrane-bound immunoglobulins serve as receptors which, upon binding of a specific antigen, trigger the clonal expansion and differentiation of B lymphocytes into immunoglobulins-secreting plasma cells. Secreted immunoglobulins mediate the effector phase of humoral immunity, which results in the elimination of bound antigens. The antigen binding site is formed by the variable domain of one heavy chain, together with that of its associated light chain. Thus, each immunoglobulin has two antigen binding sites with remarkable affinity for a particular antigen. The variable domains are assembled by a process called V-(D)-J rearrangement and can then be subjected to somatic hypermutations which, after exposure to antigen and selection, allow affinity maturation for a particular antigen. This chain is Immunoglobulin heavy variable 1-58, found in Homo sapiens (Human).